The primary structure comprises 1274 residues: Clustered mitochondria protein homolog (1274 aa).

A disordered region spans residues Met1–Glu53. TPR repeat units lie at residues Ser293–Pro326, Asp510–Pro543, and Ala628–Asp661. The region spanning Asp342–Gln586 is the Clu domain. 2 disordered regions span residues Ala631–Leu655 and Val893–Ala925. 4 TPR repeats span residues Ala998–Thr1031, Ile1040–Ile1073, Ile1082–Leu1115, and Ala1124–Gln1157. Positions Ile1197–Ala1274 are disordered. Positions Thr1200–Pro1217 are enriched in polar residues.

This sequence belongs to the CLU family. In terms of assembly, may associate with the eukaryotic translation initiation factor 3 (eIF-3) complex.

It is found in the cytoplasm. Functionally, mRNA-binding protein involved in proper cytoplasmic distribution of mitochondria. In Aspergillus terreus (strain NIH 2624 / FGSC A1156), this protein is Clustered mitochondria protein homolog.